A 543-amino-acid chain; its full sequence is MAKILSFSDDARHQLEHGVNALADAVKVTLGPRGRNVVLDKKFGAPTITNDGVTIAKEIELTDPHENLGAQLVKEVATKTNDVAGDGTTTATVLAQALVREGLRNVAAGANPTGLKRGIDAAATKVSEALLGKAVEVSDKAAIAHVATVSAQDSTIGELIAEAMERVGRDGVITVEEGSTLATELDVTEGLQFDKGFISPNFVTDAEGQESVLEDPYILITTQKISAIEELLPLLEKVLQDSKPLLIIAEDVEGQALSTLVVNALRKTMKVCAVKAPGFGDRRKAMLQDMAILTGAELVAPELGYKLDQVGLEVLGTARRVVVDKETTTVVDGGGQAADAADRVAQIRKEIEASDSEWDREKLAERLAKLSGGVAVIRAGAATEVEMKERKHRIEDAIAATKAAVEEGTIPGGGAALAQVLPALDDDLGLDGDEKVGVSIVRKALVEPLRWIAQNAGHDGYVVVQKVVDKDWGHGLDAATGEYVDLAKAGILDPVKVTRNAVANAASIAGLLLTTESLVVDKPQEPEPAAGGHGHGHQHGPGF.

ATP contacts are provided by residues 29 to 32, 86 to 90, G413, 477 to 479, and D493; these read TLGP, DGTTT, and DAA. A disordered region spans residues 523–543; the sequence is PQEPEPAAGGHGHGHQHGPGF. Residues 534 to 543 are compositionally biased toward basic residues; the sequence is GHGHQHGPGF.

It belongs to the chaperonin (HSP60) family. In terms of assembly, forms a cylinder of 14 subunits composed of two heptameric rings stacked back-to-back. Interacts with the co-chaperonin GroES.

It localises to the cytoplasm. The catalysed reaction is ATP + H2O + a folded polypeptide = ADP + phosphate + an unfolded polypeptide.. Its function is as follows. Together with its co-chaperonin GroES, plays an essential role in assisting protein folding. The GroEL-GroES system forms a nano-cage that allows encapsulation of the non-native substrate proteins and provides a physical environment optimized to promote and accelerate protein folding. This chain is Chaperonin GroEL 2, found in Salinispora tropica (strain ATCC BAA-916 / DSM 44818 / JCM 13857 / NBRC 105044 / CNB-440).